A 130-amino-acid polypeptide reads, in one-letter code: Glycine cleavage system H protein (130 aa).

The Lipoyl-binding domain occupies 22 to 103 (KAYIGISDCA…PYGSWIAAIE (82 aa)). Lysine 63 carries the N6-lipoyllysine modification.

The protein belongs to the GcvH family. In terms of assembly, the glycine cleavage system is composed of four proteins: P, T, L and H. Requires (R)-lipoate as cofactor.

The glycine cleavage system catalyzes the degradation of glycine. The H protein shuttles the methylamine group of glycine from the P protein to the T protein. The chain is Glycine cleavage system H protein from Clostridium botulinum (strain ATCC 19397 / Type A).